Consider the following 118-residue polypeptide: Urease subunit beta (118 aa).

Belongs to the urease beta subunit family. In terms of assembly, heterotrimer of UreA (gamma), UreB (beta) and UreC (alpha) subunits. Three heterotrimers associate to form the active enzyme.

Its subcellular location is the cytoplasm. The enzyme catalyses urea + 2 H2O + H(+) = hydrogencarbonate + 2 NH4(+). It functions in the pathway nitrogen metabolism; urea degradation; CO(2) and NH(3) from urea (urease route): step 1/1. This chain is Urease subunit beta, found in Aliivibrio fischeri (strain MJ11) (Vibrio fischeri).